A 224-amino-acid polypeptide reads, in one-letter code: Elongation factor 1-beta (224 aa).

It belongs to the EF-1-beta/EF-1-delta family. EF-1 is composed of 4 subunits: alpha, beta (1B-alpha=beta'), delta (1B-beta), and gamma (1B-gamma).

EF-1-beta and EF-1-beta' stimulate the exchange of GDP bound to EF-1-alpha to GTP. The protein is Elongation factor 1-beta of Oryza sativa subsp. japonica (Rice).